The chain runs to 778 residues: Endonuclease MutS2 (778 aa).

Residue 328–335 participates in ATP binding; the sequence is GPNTGGKT. In terms of domain architecture, Smr spans 702–777; it reads LDLRGKRYEE…GSGATIVTFK (76 aa).

It belongs to the DNA mismatch repair MutS family. MutS2 subfamily. In terms of assembly, homodimer. Binds to stalled ribosomes, contacting rRNA.

Functionally, endonuclease that is involved in the suppression of homologous recombination and thus may have a key role in the control of bacterial genetic diversity. Its function is as follows. Acts as a ribosome collision sensor, splitting the ribosome into its 2 subunits. Detects stalled/collided 70S ribosomes which it binds and splits by an ATP-hydrolysis driven conformational change. Acts upstream of the ribosome quality control system (RQC), a ribosome-associated complex that mediates the extraction of incompletely synthesized nascent chains from stalled ribosomes and their subsequent degradation. Probably generates substrates for RQC. The polypeptide is Endonuclease MutS2 (Streptococcus pneumoniae (strain JJA)).